Reading from the N-terminus, the 404-residue chain is Propionate kinase (404 aa).

This sequence belongs to the acetokinase family. PduW subfamily.

Its subcellular location is the cytoplasm. The catalysed reaction is propanoate + ATP = propanoyl phosphate + ADP. Its pathway is polyol metabolism; 1,2-propanediol degradation. Works with phosphate acetyltransferase (pta) to capture exogenous propionate and regenerate propionyl-CoA during degradation of 1,2-propanediol (1,2-PD). This chain is Propionate kinase, found in Escherichia fergusonii (strain ATCC 35469 / DSM 13698 / CCUG 18766 / IAM 14443 / JCM 21226 / LMG 7866 / NBRC 102419 / NCTC 12128 / CDC 0568-73).